The chain runs to 342 residues: Holliday junction branch migration complex subunit RuvB (342 aa).

Positions 1–181 (MENRMVTPFD…FGMLCAMEFY (181 aa)) are large ATPase domain (RuvB-L). ATP-binding positions include Leu-20, Arg-21, Gly-62, Lys-65, Thr-66, Thr-67, 128 to 130 (EDY), Arg-171, Tyr-181, and Arg-218. Position 66 (Thr-66) interacts with Mg(2+). The interval 182-252 (TDEELMEIVV…GAKAALDLLE (71 aa)) is small ATPAse domain (RuvB-S). Residues 255 to 342 (KEGLDKIDNK…KDNQVSIFNK (88 aa)) form a head domain (RuvB-H) region. Residues Arg-310 and Arg-315 each contribute to the DNA site.

It belongs to the RuvB family. Homohexamer. Forms an RuvA(8)-RuvB(12)-Holliday junction (HJ) complex. HJ DNA is sandwiched between 2 RuvA tetramers; dsDNA enters through RuvA and exits via RuvB. An RuvB hexamer assembles on each DNA strand where it exits the tetramer. Each RuvB hexamer is contacted by two RuvA subunits (via domain III) on 2 adjacent RuvB subunits; this complex drives branch migration. In the full resolvosome a probable DNA-RuvA(4)-RuvB(12)-RuvC(2) complex forms which resolves the HJ.

It localises to the cytoplasm. The catalysed reaction is ATP + H2O = ADP + phosphate + H(+). In terms of biological role, the RuvA-RuvB-RuvC complex processes Holliday junction (HJ) DNA during genetic recombination and DNA repair, while the RuvA-RuvB complex plays an important role in the rescue of blocked DNA replication forks via replication fork reversal (RFR). RuvA specifically binds to HJ cruciform DNA, conferring on it an open structure. The RuvB hexamer acts as an ATP-dependent pump, pulling dsDNA into and through the RuvAB complex. RuvB forms 2 homohexamers on either side of HJ DNA bound by 1 or 2 RuvA tetramers; 4 subunits per hexamer contact DNA at a time. Coordinated motions by a converter formed by DNA-disengaged RuvB subunits stimulates ATP hydrolysis and nucleotide exchange. Immobilization of the converter enables RuvB to convert the ATP-contained energy into a lever motion, pulling 2 nucleotides of DNA out of the RuvA tetramer per ATP hydrolyzed, thus driving DNA branch migration. The RuvB motors rotate together with the DNA substrate, which together with the progressing nucleotide cycle form the mechanistic basis for DNA recombination by continuous HJ branch migration. Branch migration allows RuvC to scan DNA until it finds its consensus sequence, where it cleaves and resolves cruciform DNA. The sequence is that of Holliday junction branch migration complex subunit RuvB from Clostridium botulinum (strain Loch Maree / Type A3).